The chain runs to 301 residues: Cell division control protein 2 homolog 1 (301 aa).

Residues 5 to 297 (YQRLEKIGEG…AAQALEHPYF (293 aa)) form the Protein kinase domain. Residues 11-19 (IGEGSYGVV) and Lys34 contribute to the ATP site. At Ser15 the chain carries Phosphoserine. Phosphotyrosine is present on Tyr16. Asp127 serves as the catalytic Proton acceptor. Thr160 is modified (phosphothreonine; by CAK).

It belongs to the protein kinase superfamily. CMGC Ser/Thr protein kinase family. CDC2/CDKX subfamily. In terms of assembly, forms a stable but non-covalent complex with a regulatory subunit and with a cyclin.

The catalysed reaction is L-seryl-[protein] + ATP = O-phospho-L-seryl-[protein] + ADP + H(+). It catalyses the reaction L-threonyl-[protein] + ATP = O-phospho-L-threonyl-[protein] + ADP + H(+). With respect to regulation, phosphorylation at Ser-15 or Tyr-16 inactivates the enzyme, while phosphorylation at Thr-160 activates it. Its function is as follows. Probably involved in the control of the cell cycle. This Trypanosoma congolense protein is Cell division control protein 2 homolog 1 (CRK1).